The following is a 337-amino-acid chain: G-protein coupled receptor 65 (337 aa).

The Extracellular portion of the chain corresponds to 1–5; that stretch reads MNSTC. Asn2 carries N-linked (GlcNAc...) asparagine glycosylation. 2 disulfide bridges follow: Cys5–Cys160 and Cys87–Cys170. Residues 6–42 form a helical membrane-spanning segment; it reads IEEQHDLDHYLFPIVYIFVIIVSIPANIGSLCVSFLQ. Over 43–46 the chain is Cytoplasmic; sequence AKKE. Residues 47 to 77 traverse the membrane as a helical segment; that stretch reads SELGIYLFSLSLSDLLYALTLPLWIDYTWNK. At 78–82 the chain is on the extracellular side; the sequence is DNWTF. Asn79 carries an N-linked (GlcNAc...) asparagine glycan. Residues 83–118 traverse the membrane as a helical segment; the sequence is SPALCKGSAFLMYMNFYSSTAFLTCIAVDRYLAVVY. The Cytoplasmic segment spans residues 119–126; it reads PLKFFFLR. Residues 127–153 form a helical membrane-spanning segment; that stretch reads TRRFALMVSLSIWILETIFNAVMLWED. Topologically, residues 154-174 are extracellular; that stretch reads ETVVEYCDAEKSNFTLCYDKY. An extracellular loop 2 (ECL2) region spans residues 154-174; that stretch reads ETVVEYCDAEKSNFTLCYDKY. Asn166 is a glycosylation site (N-linked (GlcNAc...) asparagine). Residues 175–212 form a helical membrane-spanning segment; it reads PLEKWQINLNLFRTCTGYAIPLVTILICNRKVYQAVRH. Over 213–216 the chain is Cytoplasmic; the sequence is NKAT. A helical membrane pass occupies residues 217–252; it reads ENKEKKRIIKLLVSITVTFVLCFTPFHVMLLIRCIL. Residues 253–264 are Extracellular-facing; sequence EHAVNFEDHSNS. The chain crosses the membrane as a helical span at residues 265–293; it reads GKRTYTMYRITVALTSLNCVADPILYCFV. Topologically, residues 294 to 337 are cytoplasmic; it reads TETGRYDMWNILKFCTGRCNTSQRQRKRILSVSTKDTMELEVLE.

Belongs to the G-protein coupled receptor 1 family. Predominantly expressed in thymus, spleen, lymph nodes, small intestine, lung, placenta and peripheral blood leukocytes.

The protein localises to the cell membrane. It is found in the early endosome membrane. The protein resides in the late endosome membrane. With respect to regulation, activated by a network of residues that connects an extracellular-facing cavity to Glu-142, a conserved charged residue buried in the transmembrane core of the receptor. Protonation likely drives conformational changes in extracellular loop 2 (ECL2), which stabilizes movement of transmembrane 3 (TM3) and a series of rearrangements that connect the extracellular-facing cavity to Glu-142, a residue only conserved in proton-sensing G-protein coupled receptors. Activated by BTB09089, a positive allosteric modulator. Its function is as follows. Proton-sensing G-protein coupled receptor activated by extracellular pH, which is required to monitor pH changes and generate adaptive reactions. Activated by an optimal pH of 7.4. Ligand binding causes a conformation change that triggers signaling via guanine nucleotide-binding proteins (G proteins) and modulates the activity of downstream effectors, such as adenylate cyclase. GPR65 is mainly coupled to G(s) G proteins and mediates activation of adenylate cyclase activity. May also act as a receptor for the glycosphingolipid psychosine (PSY) and several related glycosphingolipids. Plays a role in immune response by maintaining lysosome function and regulating T-cell metabolism. Acts as a regulator of inflammation by mediating pH-sensing of extracellular acidification which takes place in inflamed tissues: activation regulates endo-lysosomal function of immune cells and T-cell metabolism. Constitutively active in endosomes and stimulates adenylate cyclase production from endosomes independently from extracellular pH changes. This Homo sapiens (Human) protein is G-protein coupled receptor 65.